Consider the following 232-residue polypeptide: UPF0758 protein BH3032 (232 aa).

Residues 107-229 form the MPN domain; the sequence is VIRTPEDVSR…FVSLKEKGHL (123 aa). Residues His-178, His-180, and Asp-191 each contribute to the Zn(2+) site. The JAMM motif motif lies at 178–191; that stretch reads HNHPSGDPTPSRED.

The protein belongs to the UPF0758 family.

The chain is UPF0758 protein BH3032 from Halalkalibacterium halodurans (strain ATCC BAA-125 / DSM 18197 / FERM 7344 / JCM 9153 / C-125) (Bacillus halodurans).